The sequence spans 185 residues: Elongation factor P (185 aa).

The protein belongs to the elongation factor P family.

The protein localises to the cytoplasm. Its pathway is protein biosynthesis; polypeptide chain elongation. Its function is as follows. Involved in peptide bond synthesis. Stimulates efficient translation and peptide-bond synthesis on native or reconstituted 70S ribosomes in vitro. Probably functions indirectly by altering the affinity of the ribosome for aminoacyl-tRNA, thus increasing their reactivity as acceptors for peptidyl transferase. The sequence is that of Elongation factor P from Bacillus licheniformis (strain ATCC 14580 / DSM 13 / JCM 2505 / CCUG 7422 / NBRC 12200 / NCIMB 9375 / NCTC 10341 / NRRL NRS-1264 / Gibson 46).